A 200-amino-acid chain; its full sequence is Large ribosomal subunit protein uL18 (200 aa).

Belongs to the universal ribosomal protein uL18 family. In terms of assembly, part of the 50S ribosomal subunit. Contacts the 5S and 23S rRNAs.

This is one of the proteins that bind and probably mediate the attachment of the 5S RNA into the large ribosomal subunit, where it forms part of the central protuberance. This Thermococcus sibiricus (strain DSM 12597 / MM 739) protein is Large ribosomal subunit protein uL18.